A 174-amino-acid chain; its full sequence is Adipose-secreted signaling protein (174 aa).

It belongs to the ADISSP family.

The protein localises to the secreted. May be involved in thermogenesis and glucose homeostasis. This chain is Adipose-secreted signaling protein, found in Xenopus tropicalis (Western clawed frog).